A 247-amino-acid polypeptide reads, in one-letter code: Small ribosomal subunit protein uS2 (247 aa).

The protein belongs to the universal ribosomal protein uS2 family.

In Halorhodospira halophila (strain DSM 244 / SL1) (Ectothiorhodospira halophila (strain DSM 244 / SL1)), this protein is Small ribosomal subunit protein uS2.